Consider the following 692-residue polypeptide: Ena/VASP-like protein (692 aa).

The 112-residue stretch at 1–112 (MSEQSICQAR…NAMLFALNIM (112 aa)) folds into the WH1 domain. Disordered regions lie at residues 116 to 310 (DGGP…VQKN), 466 to 518 (SAAM…YEES), and 531 to 650 (KLRK…NDVS). 2 stretches are compositionally biased toward polar residues: residues 123 to 132 (RQAQNIQNGP) and 159 to 169 (STTVSTLQINV). Positions 214–226 (SSKSTNKSSNRTS) are enriched in low complexity. A compositionally biased stretch (polar residues) spans 231–267 (LQNSHCGSEPSTSQSSAFSPIRPSNGTVSRSIKQISL). Composition is skewed to low complexity over residues 288–310 (PSLSFSPCSSSPPVSVTSSVQKN) and 466–479 (SAAMVASVGSAPAP). The span at 480–506 (ASGPPPPPPPGPPPPSGGTPPPAPPLP) shows a compositional bias: pro residues. The interval 522 to 542 (GLAAALAGAKLRKVQRPEDGS) is EVH2 block A. Residues 522–689 (GLAAALAGAK…DAIRQELSRI (168 aa)) are EVH2. A KLKR motif is present at residues 531–534 (KLRK). Residues 563–580 (GGLMEEMNKLLAKRRKAA) are EVH2 block B. Over residues 597–617 (EDASLSSSPVTRGPTPQNSSD) the composition is skewed to polar residues. A compositionally biased stretch (basic and acidic residues) spans 618–628 (LGKKPWERSNS). An EVH2 block C region spans residues 655 to 689 (DFDRMKQEILEEVVRELHKVKEEIIDAIRQELSRI).

Belongs to the Ena/VASP family. As to expression, during embryonic and tadpole development, expressed in the cement gland, brain, neural tube, myotome and neural placodes, including the otic, lateral line and olfactory placodes. All isoforms show similar spatial expression patterns.

It is found in the cytoplasm. Its subcellular location is the cytoskeleton. The protein resides in the stress fiber. It localises to the cell projection. The protein localises to the lamellipodium. In terms of biological role, ena/VASP proteins are actin-associated proteins involved in a range of processes dependent on cytoskeleton remodeling and cell polarity such as axon guidance and lamellipodial and filopodial dynamics in migrating cells. Evl enhances actin nucleation and polymerization. The protein is Ena/VASP-like protein of Xenopus laevis (African clawed frog).